Consider the following 580-residue polypeptide: Rap guanine nucleotide exchange factor 5 (580 aa).

The N-terminal Ras-GEF domain occupies 68-201; the sequence is DRYVVVSGTP…ELKEFQKILG (134 aa). Residues 345–579 form the Ras-GEF domain; it reads NTWDLALELM…FELSHRIEPR (235 aa).

As to expression, widely expressed with highest levels in brain.

Its subcellular location is the nucleus. In terms of biological role, guanine nucleotide exchange factor (GEF) for RAP1A, RAP2A and MRAS/M-Ras-GTP. Its association with MRAS inhibits Rap1 activation. This chain is Rap guanine nucleotide exchange factor 5 (RAPGEF5), found in Homo sapiens (Human).